The sequence spans 241 residues: 7-cyano-7-deazaguanine synthase (241 aa).

ATP is bound at residue 15-25 (FSGGQDSTTTL). Positions 203, 218, 221, and 224 each coordinate Zn(2+).

Belongs to the QueC family. Zn(2+) serves as cofactor.

It catalyses the reaction 7-carboxy-7-deazaguanine + NH4(+) + ATP = 7-cyano-7-deazaguanine + ADP + phosphate + H2O + H(+). It functions in the pathway purine metabolism; 7-cyano-7-deazaguanine biosynthesis. Its function is as follows. Catalyzes the ATP-dependent conversion of 7-carboxy-7-deazaguanine (CDG) to 7-cyano-7-deazaguanine (preQ(0)). The chain is 7-cyano-7-deazaguanine synthase from Azorhizobium caulinodans (strain ATCC 43989 / DSM 5975 / JCM 20966 / LMG 6465 / NBRC 14845 / NCIMB 13405 / ORS 571).